Here is a 236-residue protein sequence, read N- to C-terminus: Mediator of RNA polymerase II transcription subunit 11 (236 aa).

2 stretches are compositionally biased toward basic and acidic residues: residues 136–152 (IEKN…KEAV) and 168–186 (EETK…DIKQ). A disordered region spans residues 136–236 (IEKNAEEDKT…NVDDLFEDIL (101 aa)). The segment covering 226–236 (SNVDDLFEDIL) has biased composition (acidic residues).

The protein belongs to the Mediator complex subunit 11 family. In terms of assembly, component of the Mediator complex.

Its subcellular location is the nucleus. Functionally, component of the Mediator complex, a coactivator involved in the regulated transcription of nearly all RNA polymerase II-dependent genes. Mediator functions as a bridge to convey information from gene-specific regulatory proteins to the basal RNA polymerase II transcription machinery. Mediator is recruited to promoters by direct interactions with regulatory proteins and serves as a scaffold for the assembly of a functional pre-initiation complex with RNA polymerase II and the general transcription factors. This is Mediator of RNA polymerase II transcription subunit 11 (MED11) from Scheffersomyces stipitis (strain ATCC 58785 / CBS 6054 / NBRC 10063 / NRRL Y-11545) (Yeast).